The following is a 334-amino-acid chain: Nucleoid-associated protein YejK (334 aa).

It belongs to the YejK family.

The protein resides in the cytoplasm. The protein localises to the nucleoid. This chain is Nucleoid-associated protein YejK, found in Escherichia fergusonii (strain ATCC 35469 / DSM 13698 / CCUG 18766 / IAM 14443 / JCM 21226 / LMG 7866 / NBRC 102419 / NCTC 12128 / CDC 0568-73).